Consider the following 129-residue polypeptide: Membrane protein 0 (129 aa).

The tract at residues 1 to 25 is disordered; the sequence is MATVHYSRRPGTPPVTLTSSPSMDD. The PPXY motif motif lies at 44–47; that stretch reads PPPY. The chain crosses the membrane as a helical span at residues 100-120; that stretch reads FLILFGILTLTAVVVAIVAVF.

It belongs to the varicellovirus ORF0 protein family. As to quaternary structure, interacts with host ITCH; this interaction probably mediates ITCH degradation.

Its subcellular location is the host Golgi apparatus membrane. This Homo sapiens (Human) protein is Membrane protein 0.